A 376-amino-acid chain; its full sequence is Beta-centractin (376 aa).

M1 bears the N-acetylmethionine mark. Y4 carries the post-translational modification 3'-nitrotyrosine.

It belongs to the actin family. ARP1 subfamily.

It is found in the cytoplasm. Its subcellular location is the cytoskeleton. The protein localises to the microtubule organizing center. It localises to the centrosome. Component of a multi-subunit complex involved in microtubule based vesicle motility. It is associated with the centrosome. This is Beta-centractin (ACTR1B) from Homo sapiens (Human).